Reading from the N-terminus, the 663-residue chain is 72 kDa type IV collagenase (663 aa).

The N-terminal stretch at 1–26 is a signal peptide; it reads MKTHSVFGFFFKVLLIQVYLFNKTLA. The propeptide at 27–106 is activation peptide; it reads APSPIIKFPG…PRCGNPDVAN (80 aa). A Cysteine switch motif is present at residues 97-104; sequence PRCGNPDV. Cys-99 is a binding site for Zn(2+). Residues 107-218 are collagenase-like 1; sequence YNFFPRKPKW…LWTLGEGQVV (112 aa). Ca(2+)-binding residues include Asp-131 and Asp-165. Positions 175 and 177 each coordinate Zn(2+). Positions 182 and 183 each coordinate Ca(2+). His-190 provides a ligand contact to Zn(2+). The Ca(2+) site is built by Gly-197, Gly-199, and Asp-201. His-203 is a Zn(2+) binding site. Residues Asp-205, Asp-206, and Glu-208 each coordinate Ca(2+). A collagen-binding region spans residues 219 to 393; it reads RVKYGNADGE…WGFCPDQGYS (175 aa). 3 consecutive Fibronectin type-II domains span residues 225 to 273, 283 to 331, and 341 to 389; these read ADGE…FCPH, GDGQ…FCPE, and SEGA…FCPD. 6 cysteine pairs are disulfide-bonded: Cys-230-Cys-256, Cys-244-Cys-271, Cys-288-Cys-314, Cys-302-Cys-329, Cys-346-Cys-372, and Cys-360-Cys-387. The segment at 394–468 is collagenase-like 2; that stretch reads LFLVAAHEFG…GPRPTLGPVT (75 aa). Residue His-400 participates in Zn(2+) binding. The active site involves Glu-401. Residues His-404 and His-410 each contribute to the Zn(2+) site. The interval 445-464 is disordered; it reads SPDVEPGPGPGPGPGPRPTL. Over residues 449–463 the composition is skewed to pro residues; it reads EPGPGPGPGPGPRPT. A disulfide bridge links Cys-472 with Cys-663. Hemopexin repeat units lie at residues 475 to 519, 520 to 566, 568 to 616, and 617 to 663; these read DIVF…WPDL, PEKI…GLPP, VQRI…WNGV, and PDNL…WLGC. 4 residues coordinate Ca(2+): Asp-479, Asp-524, Asp-572, and Asp-621.

It belongs to the peptidase M10A family. As to quaternary structure, ligand for integrin alpha-V/beta-3. It depends on Ca(2+) as a cofactor. Zn(2+) serves as cofactor. Post-translationally, the propeptide is processed by MMP14 (MT-MMP1) and MMP16 (MT-MMP3). In terms of tissue distribution, produced by normal skin fibroblasts.

Its subcellular location is the secreted. It localises to the extracellular space. It is found in the extracellular matrix. The catalysed reaction is Cleavage of gelatin type I and collagen types IV, V, VII, X. Cleaves the collagen-like sequence Pro-Gln-Gly-|-Ile-Ala-Gly-Gln.. This Gallus gallus (Chicken) protein is 72 kDa type IV collagenase (MMP2).